The chain runs to 328 residues: Lipoyl synthase (328 aa).

7 residues coordinate [4Fe-4S] cluster: Cys75, Cys80, Cys86, Cys101, Cys105, Cys108, and Ser315. Residues 87–304 (FNHGTATFMI…EREAKKMGYE (218 aa)) enclose the Radical SAM core domain.

It belongs to the radical SAM superfamily. Lipoyl synthase family. [4Fe-4S] cluster is required as a cofactor.

It is found in the cytoplasm. It catalyses the reaction [[Fe-S] cluster scaffold protein carrying a second [4Fe-4S](2+) cluster] + N(6)-octanoyl-L-lysyl-[protein] + 2 oxidized [2Fe-2S]-[ferredoxin] + 2 S-adenosyl-L-methionine + 4 H(+) = [[Fe-S] cluster scaffold protein] + N(6)-[(R)-dihydrolipoyl]-L-lysyl-[protein] + 4 Fe(3+) + 2 hydrogen sulfide + 2 5'-deoxyadenosine + 2 L-methionine + 2 reduced [2Fe-2S]-[ferredoxin]. It participates in protein modification; protein lipoylation via endogenous pathway; protein N(6)-(lipoyl)lysine from octanoyl-[acyl-carrier-protein]: step 2/2. Catalyzes the radical-mediated insertion of two sulfur atoms into the C-6 and C-8 positions of the octanoyl moiety bound to the lipoyl domains of lipoate-dependent enzymes, thereby converting the octanoylated domains into lipoylated derivatives. This is Lipoyl synthase from Colwellia psychrerythraea (strain 34H / ATCC BAA-681) (Vibrio psychroerythus).